We begin with the raw amino-acid sequence, 399 residues long: S-adenosylmethionine synthase (399 aa).

His-15 contributes to the ATP binding site. A Mg(2+)-binding site is contributed by Asp-17. Glu-43 is a K(+) binding site. Glu-56 and Gln-99 together coordinate L-methionine. The tract at residues 99–109 (QSADIAQGVDN) is flexible loop. ATP-binding positions include 174–176 (DGK), 244–245 (RF), Asp-253, 259–260 (RK), Ala-276, and Lys-280. Asp-253 lines the L-methionine pocket. Lys-284 contributes to the L-methionine binding site.

This sequence belongs to the AdoMet synthase family. In terms of assembly, homotetramer; dimer of dimers. The cofactor is Mg(2+). It depends on K(+) as a cofactor.

It localises to the cytoplasm. The enzyme catalyses L-methionine + ATP + H2O = S-adenosyl-L-methionine + phosphate + diphosphate. It participates in amino-acid biosynthesis; S-adenosyl-L-methionine biosynthesis; S-adenosyl-L-methionine from L-methionine: step 1/1. Functionally, catalyzes the formation of S-adenosylmethionine (AdoMet) from methionine and ATP. The overall synthetic reaction is composed of two sequential steps, AdoMet formation and the subsequent tripolyphosphate hydrolysis which occurs prior to release of AdoMet from the enzyme. The chain is S-adenosylmethionine synthase from Salinispora arenicola (strain CNS-205).